Consider the following 600-residue polypeptide: Xylulose kinase (600 aa).

79-82 (WLEA) contacts substrate. Serine 244 bears the Phosphoserine mark. Aspartate 299 contributes to the substrate binding site. Residues glycine 358 and 505-509 (GASKN) each bind ATP.

This sequence belongs to the FGGY kinase family.

The protein resides in the cytoplasm. The catalysed reaction is D-xylulose + ATP = D-xylulose 5-phosphate + ADP + H(+). Its function is as follows. Xylulose kinase necessary for growth in culture media with D-xylulose as the solecarbon source. The sequence is that of Xylulose kinase from Saccharomyces cerevisiae (strain ATCC 204508 / S288c) (Baker's yeast).